Consider the following 152-residue polypeptide: Nucleoside diphosphate kinase (152 aa).

ATP contacts are provided by Lys11, Phe59, Arg87, Thr93, Arg104, and Asn114. His117 (pros-phosphohistidine intermediate) is an active-site residue.

The protein belongs to the NDK family. As to quaternary structure, homotetramer. It depends on Mg(2+) as a cofactor.

The protein localises to the cytoplasm. The enzyme catalyses dZDP + ATP = dZTP + ADP. The catalysed reaction is a 2'-deoxyribonucleoside 5'-diphosphate + ATP = a 2'-deoxyribonucleoside 5'-triphosphate + ADP. It carries out the reaction a ribonucleoside 5'-diphosphate + ATP = a ribonucleoside 5'-triphosphate + ADP. It participates in purine metabolism. Major role in the synthesis of nucleoside triphosphates other than ATP. The ATP gamma phosphate is transferred to the NDP beta phosphate via a ping-pong mechanism, using a phosphorylated active-site intermediate. Its function is as follows. (Microbial infection) Catalyzes the phosphorylation of dZDP to dZTP, when the bacterium is infected by a phage that produces the substrate for the synthesis of dZTP (2- amino-2'-deoxyadenosine 5'-triphosphate), which is then used by the phage as a DNA polymerase substrate. This Synechococcus sp. (strain CC9311) protein is Nucleoside diphosphate kinase.